The sequence spans 598 residues: Protein unc-93 homolog B1 (598 aa).

The tract at residues Met-1–Leu-36 is disordered. 5 helical membrane passes run Val-64–Met-84, Lys-110–Ile-130, Phe-132–Thr-152, Thr-160–Gly-180, and Ile-223–Leu-243. 2 N-linked (GlcNAc...) asparagine glycosylation sites follow: Asn-251 and Asn-272. Helical transmembrane passes span Leu-285–Gly-305, Leu-343–Leu-363, Leu-378–Trp-398, Val-403–Ala-423, and Val-428–Leu-448. Residue Asn-449 is glycosylated (N-linked (GlcNAc...) asparagine). Helical transmembrane passes span Phe-469–Ser-489 and Ala-495–Glu-515. Residues Pro-524–Gln-598 are disordered. Over residues Glu-544–Gly-554 the composition is skewed to acidic residues. Phosphoserine occurs at positions 547 and 550.

Belongs to the unc-93 family. In terms of assembly, interacts with TLR3, TLR5, TLR7, TLR8, TLR9 and TLR13 (probably via transmembrane domain). Post-translationally, N-glycosylated.

The protein localises to the endoplasmic reticulum membrane. It is found in the endosome. Its subcellular location is the lysosome. It localises to the cytoplasmic vesicle. The protein resides in the phagosome. In terms of biological role, plays an important role in innate and adaptive immunity by regulating nucleotide-sensing Toll-like receptor (TLR) signaling. Required for the transport of a subset of TLRs (including TLR3, TLR7 and TLR9) from the endoplasmic reticulum to endolysosomes where they can engage pathogen nucleotides and activate signaling cascades. May play a role in autoreactive B-cells removal. The sequence is that of Protein unc-93 homolog B1 from Mus musculus (Mouse).